We begin with the raw amino-acid sequence, 2439 residues long: Centrosomal protein of 290 kDa (2439 aa).

Coiled-coil stretches lie at residues 75–913 and 1271–1576; these read AEQA…VVTE and NTML…YMDT. 3 disordered regions span residues 1802–1824, 1867–1890, and 2017–2048; these read ETLN…EKEA, ELDR…KSSK, and ESRL…FQKE. Residues 2039-2048 show a composition bias toward basic and acidic residues; the sequence is SQREHEFQKE. The stretch at 2046–2394 forms a coiled coil; it reads QKENLRLSTE…KLTQELKHFD (349 aa).

As to quaternary structure, part of the tectonic-like complex (also named B9 complex).

The protein localises to the cytoplasm. It localises to the cytoskeleton. Its subcellular location is the microtubule organizing center. It is found in the centrosome. The protein resides in the centriolar satellite. The protein localises to the nucleus. It localises to the cilium basal body. Involved in early and late steps in cilia formation. May play a role in early ciliogenesis in the disappearance of centriolar satellites and in the transition of primary ciliar vesicles (PCVs) to capped ciliary vesicles (CCVs). In the ciliary transition zone is part of the tectonic-like complex which is required for tissue-specific ciliogenesis and may regulate ciliary membrane composition. Involved in regulation of the BBSome complex integrity and in ciliary targeting of selected BBSome cargos. Required for the correct localization of ciliary and phototransduction proteins in retinal photoreceptor cells; may play a role in ciliary transport processes. Involved in development of the nervous system and kidney. The polypeptide is Centrosomal protein of 290 kDa (cep290) (Danio rerio (Zebrafish)).